Consider the following 68-residue polypeptide: Beta-defensin 1 (68 aa).

Positions 1–21 (MRTSYLLLFTLCLLLSEMASG) are cleaved as a signal peptide. The propeptide occupies 22–32 (DNFLTGLGHRS). Intrachain disulfides connect cysteine 37-cysteine 66, cysteine 44-cysteine 59, and cysteine 49-cysteine 67.

The protein belongs to the beta-defensin family. In terms of assembly, monomer. Homodimer.

It localises to the secreted. The protein resides in the membrane. Has bactericidal activity. May act as a ligand for C-C chemokine receptor CCR6. Positively regulates the sperm motility and bactericidal activity in a CCR6-dependent manner. Binds to CCR6 and triggers Ca2+ mobilization in the sperm which is important for its motility. This chain is Beta-defensin 1 (DEFB1), found in Macaca mulatta (Rhesus macaque).